Reading from the N-terminus, the 145-residue chain is MFLWLVIVLTISASVSSYEHKLNWVVPPANSSESFNDWASNKRFQVGDIIQFKYKKDSVMQVTKESYKQCNSSHPRFYSNTGKTRFMFDHSVPYYFISGTSGHCEKGQKMIVEVISRDHTTTSAAPPAAFAVLLCFFSLSLYFVA.

The signal sequence occupies residues 1-17; that stretch reads MFLWLVIVLTISASVSS. Positions 18-116 constitute a Phytocyanin domain; that stretch reads YEHKLNWVVP…GQKMIVEVIS (99 aa). N-linked (GlcNAc...) asparagine glycosylation is found at Asn30 and Asn71. Cys70 and Cys104 are oxidised to a cystine. Ser116 is lipidated: GPI-anchor amidated serine. Residues 117-145 constitute a propeptide, removed in mature form; sequence RDHTTTSAAPPAAFAVLLCFFSLSLYFVA.

This sequence belongs to the early nodulin-like (ENODL) family. Mostly expressed in leaves and flowers, and, to a lower extent, in roots and stems, but barely in seedlings and seeds.

The protein resides in the cell membrane. May act as a carbohydrate transporter. The chain is Early nodulin-like protein 21 from Arabidopsis thaliana (Mouse-ear cress).